Consider the following 462-residue polypeptide: NEDD8-activating enzyme E1 catalytic subunit (462 aa).

An N-acetylalanine modification is found at alanine 2. Residues 53 to 70 form an interaction with UBE2M N-terminus region; sequence HPDFEPSTESLQFLLDTC. ATP contacts are provided by residues 100–124 and 148–171; these read DMDT…GRPK and IQDF…SIIA. 2 interaction with UBE2M N-terminus regions span residues 157–161 and 192–217; these read RQFHI and PSSI…LPGM. The interval 227–229 is interaction with NEDD8; sequence LYP. The active-site Glycyl thioester intermediate is cysteine 237. Interaction with NAE1 stretches follow at residues 242-248 and 292-295; these read MPRLPEH and YNIR. The interval 331 to 338 is interaction with UBE2M N-terminus; sequence IATSAYIP. The segment at 352-357 is interaction with NEDD8; the sequence is YTYTFE. The interval 368-462 is interaction with UBE2M core domain; that stretch reads SQLPQNIQFS…QTVLFKLHFT (95 aa).

The protein belongs to the ubiquitin-activating E1 family. UBA3 subfamily. As to quaternary structure, heterodimer of UBA3 and NAE1. Interacts with NEDD8, UBE2F and UBE2M. Binds ESR1 and ESR2 with bound steroid ligand. Interacts with TBATA. As to expression, ubiquitously expressed.

The enzyme catalyses ATP + [NEDD8 protein] + [E1 NEDD8-activating enzyme]-L-cysteine = AMP + diphosphate + [E1 NEDD8-activating enzyme]-S-[NEDD8 protein]-yl-L-cysteine.. Its pathway is protein modification; protein neddylation. With respect to regulation, binding of TP53BP2 to the regulatory subunit NAE1 decreases activity. Catalytic subunit of the dimeric UBA3-NAE1 E1 enzyme. E1 activates NEDD8 by first adenylating its C-terminal glycine residue with ATP, thereafter linking this residue to the side chain of the catalytic cysteine, yielding a NEDD8-UBA3 thioester and free AMP. E1 finally transfers NEDD8 to the catalytic cysteine of UBE2M. Down-regulates steroid receptor activity. Necessary for cell cycle progression. This Rattus norvegicus (Rat) protein is NEDD8-activating enzyme E1 catalytic subunit (Uba3).